Here is a 129-residue protein sequence, read N- to C-terminus: Lysozyme C-2 (129 aa).

Positions 1–129 constitute a C-type lysozyme domain; it reads KVFERCELAR…VSSYVEGCTL (129 aa). Intrachain disulfides connect cysteine 6-cysteine 127, cysteine 30-cysteine 115, cysteine 65-cysteine 81, and cysteine 77-cysteine 95. Residues glutamate 35 and aspartate 53 contribute to the active site.

Belongs to the glycosyl hydrolase 22 family. Monomer.

The catalysed reaction is Hydrolysis of (1-&gt;4)-beta-linkages between N-acetylmuramic acid and N-acetyl-D-glucosamine residues in a peptidoglycan and between N-acetyl-D-glucosamine residues in chitodextrins.. In terms of biological role, lysozymes have primarily a bacteriolytic function; those in tissues and body fluids are associated with the monocyte-macrophage system and enhance the activity of immunoagents. This is Lysozyme C-2 from Capra hircus (Goat).